Reading from the N-terminus, the 394-residue chain is Elongation factor Tu (394 aa).

In terms of domain architecture, tr-type G spans 10–204; it reads KPHVNVGTIG…AVDEWIPTPE (195 aa). A G1 region spans residues 19-26; the sequence is GHIDHGKT. GTP is bound at residue 19–26; that stretch reads GHIDHGKT. T26 serves as a coordination point for Mg(2+). Positions 60–64 are G2; that stretch reads GITIN. Positions 81–84 are G3; sequence DCPG. Residues 81–85 and 136–139 contribute to the GTP site; these read DCPGH and NKCD. The segment at 136–139 is G4; sequence NKCD. The interval 174–176 is G5; that stretch reads SAL.

The protein belongs to the TRAFAC class translation factor GTPase superfamily. Classic translation factor GTPase family. EF-Tu/EF-1A subfamily. In terms of assembly, monomer.

The protein localises to the cytoplasm. It catalyses the reaction GTP + H2O = GDP + phosphate + H(+). GTP hydrolase that promotes the GTP-dependent binding of aminoacyl-tRNA to the A-site of ribosomes during protein biosynthesis. This Mycoplasma pneumoniae (strain ATCC 29342 / M129 / Subtype 1) (Mycoplasmoides pneumoniae) protein is Elongation factor Tu.